A 440-amino-acid polypeptide reads, in one-letter code: Thymidine phosphorylase (440 aa).

Belongs to the thymidine/pyrimidine-nucleoside phosphorylase family. Homodimer.

It catalyses the reaction thymidine + phosphate = 2-deoxy-alpha-D-ribose 1-phosphate + thymine. It functions in the pathway pyrimidine metabolism; dTMP biosynthesis via salvage pathway; dTMP from thymine: step 1/2. The enzymes which catalyze the reversible phosphorolysis of pyrimidine nucleosides are involved in the degradation of these compounds and in their utilization as carbon and energy sources, or in the rescue of pyrimidine bases for nucleotide synthesis. The polypeptide is Thymidine phosphorylase (Escherichia coli O139:H28 (strain E24377A / ETEC)).